The sequence spans 59 residues: MSGTKDKAKGLANEAIGNVKQGVGKVTDNEKLRAEGKAQELKGEAQQVKGNVKDAVKKP.

Over residues 27–43 (TDNEKLRAEGKAQELKG) the composition is skewed to basic and acidic residues. The tract at residues 27–59 (TDNEKLRAEGKAQELKGEAQQVKGNVKDAVKKP) is disordered.

Belongs to the UPF0337 (CsbD) family.

This Pseudomonas putida (strain ATCC 47054 / DSM 6125 / CFBP 8728 / NCIMB 11950 / KT2440) protein is UPF0337 protein PP_4561.